Consider the following 273-residue polypeptide: Probable NAD(P)H dehydrogenase (quinone) FQR1-like 2 (273 aa).

A disordered region spans residues Met1–Pro60. The segment covering Thr49–Pro60 has biased composition (low complexity). In terms of domain architecture, Flavodoxin-like spans Ile75–Met263. FMN-binding positions include Ser81–His85, Phe183–Gly236, and His207. Residue Tyr83 participates in NAD(+) binding.

It belongs to the WrbA family. FMN serves as cofactor.

The protein localises to the cell membrane. The enzyme catalyses a quinone + NADH + H(+) = a quinol + NAD(+). The catalysed reaction is a quinone + NADPH + H(+) = a quinol + NADP(+). In terms of biological role, catalyzes the transfer of electrons from NADH and NADPH to reduce quinone to the hydroquinone state. The chain is Probable NAD(P)H dehydrogenase (quinone) FQR1-like 2 from Arabidopsis thaliana (Mouse-ear cress).